We begin with the raw amino-acid sequence, 172 residues long: MDLRKKIRIVEDFPIKGISFKDVTPILKDPKAMKHTTKEITKYLEDKNIDIIVGPEARGFLFGVPVAHELDIGFVPVRKPGKLPFKTFSVDYALEYGTDKLEIHSDGIEKGQNVAIVDDLLATGGTVSGVSKLVEKIGGHVSALNFVIELTELKGRDKLKGYDIQSLVKYDL.

This sequence belongs to the purine/pyrimidine phosphoribosyltransferase family. As to quaternary structure, homodimer.

It is found in the cytoplasm. The enzyme catalyses AMP + diphosphate = 5-phospho-alpha-D-ribose 1-diphosphate + adenine. It participates in purine metabolism; AMP biosynthesis via salvage pathway; AMP from adenine: step 1/1. Functionally, catalyzes a salvage reaction resulting in the formation of AMP, that is energically less costly than de novo synthesis. The polypeptide is Adenine phosphoribosyltransferase (Methanococcus maripaludis (strain C7 / ATCC BAA-1331)).